The sequence spans 284 residues: Tropomyosin alpha-3 chain (284 aa).

Position 1 is an N-acetylmethionine (M1). The tract at residues 1-40 is disordered; it reads MEAIKKKMQMLKLDKENALDRAEQAEAEQKQAEERSKQLE. Residues 1–284 are a coiled coil; that stretch reads MEAIKKKMQM…DHALNDMTSI (284 aa). The segment covering 12–40 has biased composition (basic and acidic residues); the sequence is KLDKENALDRAEQAEAEQKQAEERSKQLE. T53 is subject to Phosphothreonine. Phosphoserine occurs at positions 61 and 87. T108 and T252 each carry phosphothreonine. Phosphotyrosine is present on Y261. S271 is modified (phosphoserine). At T282 the chain carries Phosphothreonine. S283 carries the post-translational modification Phosphoserine.

This sequence belongs to the tropomyosin family. As to quaternary structure, homodimer. Heterodimer of an alpha (TPM1, TPM3 or TPM4) and a beta (TPM2) chain. Interacts with TMOD1. Interacts with TNNT1.

Its subcellular location is the cytoplasm. The protein resides in the cytoskeleton. In terms of biological role, binds to actin filaments in muscle and non-muscle cells. Plays a central role, in association with the troponin complex, in the calcium dependent regulation of vertebrate striated muscle contraction. Smooth muscle contraction is regulated by interaction with caldesmon. In non-muscle cells is implicated in stabilizing cytoskeleton actin filaments. This chain is Tropomyosin alpha-3 chain (TPM3), found in Sus scrofa (Pig).